A 266-amino-acid polypeptide reads, in one-letter code: MEFVKLQCNICFSVAEIKNYFMQPIDRLTMIPVLELDTCKHQLCSMCIRKIRKRKKTPCPLCRVESLHFNVYSINRNVVDVIKCSVTSVAQWNKINGNFDAASLASVLFEKSLLDDAEDSNNAANSDDTMLSESQAILKKLQADIAEQTQLNIKRQLDLNKLQQTSVFMQEKLHRIKNDYNNMHKSFKELQLKRISTEKALKSLNDDYAKLAAKNARLSNENKVLSNKNIELIKHKNLLQNEYTTLQSYKCITNSTITTNVTINVD.

The RING-type zinc-finger motif lies at 8-63; the sequence is CNICFSVAEIKNYFMQPIDRLTMIPVLELDTCKHQLCSMCIRKIRKRKKTPCPLCR.

It localises to the host nucleus. Functionally, plays a role in the proper expression of late and very late genes. The sequence is that of Zinc finger protein CG30 (CG30) from Bombyx mori nuclear polyhedrosis virus (BmNPV).